We begin with the raw amino-acid sequence, 217 residues long: Cytochrome c biogenesis ATP-binding export protein CcmA (217 aa).

An ABC transporter domain is found at 6 to 216 (LQLEQLACQR…QYKFFDQGNM (211 aa)). 38 to 45 (GHNGIGKT) contributes to the ATP binding site.

This sequence belongs to the ABC transporter superfamily. CcmA exporter (TC 3.A.1.107) family. In terms of assembly, the complex is composed of two ATP-binding proteins (CcmA) and two transmembrane proteins (CcmB).

The protein localises to the cell inner membrane. The catalysed reaction is heme b(in) + ATP + H2O = heme b(out) + ADP + phosphate + H(+). In terms of biological role, part of the ABC transporter complex CcmAB involved in the biogenesis of c-type cytochromes; once thought to export heme, this seems not to be the case, but its exact role is uncertain. Responsible for energy coupling to the transport system. In Histophilus somni (strain 129Pt) (Haemophilus somnus), this protein is Cytochrome c biogenesis ATP-binding export protein CcmA.